The chain runs to 674 residues: DNA ligase (674 aa).

NAD(+)-binding positions include 35-39 (DFEFD), 84-85 (SL), and glutamate 118. The N6-AMP-lysine intermediate role is filled by lysine 120. Residues arginine 141, glutamate 184, lysine 297, and lysine 321 each coordinate NAD(+). Residues cysteine 415, cysteine 418, cysteine 433, and cysteine 439 each coordinate Zn(2+). Residues 598–674 (QVNRNFEGVT…VSEDEFEAML (77 aa)) form the BRCT domain.

The protein belongs to the NAD-dependent DNA ligase family. LigA subfamily. Mg(2+) is required as a cofactor. Requires Mn(2+) as cofactor.

The enzyme catalyses NAD(+) + (deoxyribonucleotide)n-3'-hydroxyl + 5'-phospho-(deoxyribonucleotide)m = (deoxyribonucleotide)n+m + AMP + beta-nicotinamide D-nucleotide.. Its function is as follows. DNA ligase that catalyzes the formation of phosphodiester linkages between 5'-phosphoryl and 3'-hydroxyl groups in double-stranded DNA using NAD as a coenzyme and as the energy source for the reaction. It is essential for DNA replication and repair of damaged DNA. The protein is DNA ligase of Pelodictyon phaeoclathratiforme (strain DSM 5477 / BU-1).